The following is a 364-amino-acid chain: Chorismate synthase (364 aa).

2 residues coordinate NADP(+): Arg48 and Arg54. FMN contacts are provided by residues 125-127 (RSS), 238-239 (NA), Gly278, 293-297 (KPTSS), and Arg319.

The protein belongs to the chorismate synthase family. In terms of assembly, homotetramer. FMNH2 is required as a cofactor.

It catalyses the reaction 5-O-(1-carboxyvinyl)-3-phosphoshikimate = chorismate + phosphate. Its pathway is metabolic intermediate biosynthesis; chorismate biosynthesis; chorismate from D-erythrose 4-phosphate and phosphoenolpyruvate: step 7/7. Functionally, catalyzes the anti-1,4-elimination of the C-3 phosphate and the C-6 proR hydrogen from 5-enolpyruvylshikimate-3-phosphate (EPSP) to yield chorismate, which is the branch point compound that serves as the starting substrate for the three terminal pathways of aromatic amino acid biosynthesis. This reaction introduces a second double bond into the aromatic ring system. The protein is Chorismate synthase of Shewanella frigidimarina (strain NCIMB 400).